The primary structure comprises 68 residues: uncharacterized protein (68 aa).

A disordered region spans residues 1–27 (MNEFEKWIEGRYEPHEQKQKEHEDTMG).

This is an uncharacterized protein from Bacillus subtilis (strain 168).